A 449-amino-acid polypeptide reads, in one-letter code: Phosphoglucosamine mutase (449 aa).

Ser-101 (phosphoserine intermediate) is an active-site residue. Residues Ser-101, Asp-242, Asp-244, and Asp-246 each coordinate Mg(2+). Ser-101 carries the post-translational modification Phosphoserine.

This sequence belongs to the phosphohexose mutase family. It depends on Mg(2+) as a cofactor. Activated by phosphorylation.

The catalysed reaction is alpha-D-glucosamine 1-phosphate = D-glucosamine 6-phosphate. In terms of biological role, catalyzes the conversion of glucosamine-6-phosphate to glucosamine-1-phosphate. The protein is Phosphoglucosamine mutase of Methylocella silvestris (strain DSM 15510 / CIP 108128 / LMG 27833 / NCIMB 13906 / BL2).